The following is a 249-amino-acid chain: ATP synthase subunit a (249 aa).

6 helical membrane passes run 30–50 (QSPL…YVGM), 86–106 (FFPF…LGLL), 115–135 (HIAV…LASI), 146–166 (FLPA…EIIS), 191–211 (VFAG…VLAI), and 218–238 (IALT…FAIL).

The protein belongs to the ATPase A chain family. In terms of assembly, F-type ATPases have 2 components, CF(1) - the catalytic core - and CF(0) - the membrane proton channel. CF(1) has five subunits: alpha(3), beta(3), gamma(1), delta(1), epsilon(1). CF(0) has three main subunits: a(1), b(2) and c(9-12). The alpha and beta chains form an alternating ring which encloses part of the gamma chain. CF(1) is attached to CF(0) by a central stalk formed by the gamma and epsilon chains, while a peripheral stalk is formed by the delta and b chains.

Its subcellular location is the cell inner membrane. In terms of biological role, key component of the proton channel; it plays a direct role in the translocation of protons across the membrane. The protein is ATP synthase subunit a of Gluconobacter oxydans (strain 621H) (Gluconobacter suboxydans).